We begin with the raw amino-acid sequence, 59 residues long: Large ribosomal subunit protein uL30 (59 aa).

It belongs to the universal ribosomal protein uL30 family. In terms of assembly, part of the 50S ribosomal subunit.

In Streptococcus agalactiae serotype Ia (strain ATCC 27591 / A909 / CDC SS700), this protein is Large ribosomal subunit protein uL30.